Here is a 404-residue protein sequence, read N- to C-terminus: MKLPIYLDYSATCPVDPRVAEKMVQYMTMDGTFGNPASRSHRYGWQAEEAVDTAREQIAALLNADPREIVFTSGATESDNLAIKGVAHFYNKQGKHIITSKTEHKAVLDTMRQLEREGFEVTYLDPESNGLVDLAKLEAAMRDDTILVSIMHVNNEIGVVQDIAAIGELCRSRKVVFHVDAAQSAGKVAIDVQEMKVDLISLSAHKAYGPKGIGALYVRRKPRIRLEAQMHGGGHERGFRSGTLPTHQIVGMGEAFRIAKEELQQDYDHALKLRNRLLDGIKDMEAVTINGDLDQRVPHNLNVSFAFVEGESLLMALKDLAVSSGSACTSASLEPSYVLRALGLNDELAHSSIRFSFGRFTTEAEIDYAIELIRVAVDKLRAMSPLWDMYKDGVDLNTVEWAHH.

Pyridoxal 5'-phosphate is bound by residues 75-76, asparagine 155, glutamine 183, and 203-205; these read AT and SAH. Lysine 206 carries the N6-(pyridoxal phosphate)lysine modification. A pyridoxal 5'-phosphate-binding site is contributed by threonine 243. The Cysteine persulfide intermediate role is filled by cysteine 328. Cysteine 328 contributes to the [2Fe-2S] cluster binding site.

Belongs to the class-V pyridoxal-phosphate-dependent aminotransferase family. NifS/IscS subfamily. In terms of assembly, homodimer. Forms a heterotetramer with IscU, interacts with other sulfur acceptors. Pyridoxal 5'-phosphate is required as a cofactor.

Its subcellular location is the cytoplasm. The enzyme catalyses (sulfur carrier)-H + L-cysteine = (sulfur carrier)-SH + L-alanine. The protein operates within cofactor biosynthesis; iron-sulfur cluster biosynthesis. Its function is as follows. Master enzyme that delivers sulfur to a number of partners involved in Fe-S cluster assembly, tRNA modification or cofactor biosynthesis. Catalyzes the removal of elemental sulfur atoms from cysteine to produce alanine. Functions as a sulfur delivery protein for Fe-S cluster synthesis onto IscU, an Fe-S scaffold assembly protein, as well as other S acceptor proteins. In Vibrio cholerae serotype O1 (strain ATCC 39541 / Classical Ogawa 395 / O395), this protein is Cysteine desulfurase IscS.